The primary structure comprises 1032 residues: tRNA wybutosine-synthesizing protein 4 (1032 aa).

S-adenosyl-L-methionine is bound by residues R69, G95, D122, 169-170 (DL), and E196. The disordered stretch occupies residues 702 to 726 (ESVEPNKSQSEKATSKPSAQSQNEP). Over residues 716–725 (SKPSAQSQNE) the composition is skewed to polar residues. Positions 833–988 (PTKLPANLAV…AAGRDVYGNR (156 aa)) constitute a JmjC domain.

The protein belongs to the methyltransferase superfamily. LCMT family.

The enzyme catalyses 7-[(3S)-3-amino-3-carboxypropyl]wyosine(37) in tRNA(Phe) + S-adenosyl-L-methionine = 7-[(3S)-(3-amino-3-methoxycarbonyl)propyl]wyosine(37) in tRNA(Phe) + S-adenosyl-L-homocysteine. The catalysed reaction is 7-[(3S)-(3-amino-3-methoxycarbonyl)propyl]wyosine(37) in tRNA(Phe) + S-adenosyl-L-methionine + CO2 = wybutosine(37) in tRNA(Phe) + S-adenosyl-L-homocysteine + 2 H(+). It functions in the pathway tRNA modification; wybutosine-tRNA(Phe) biosynthesis. Probable S-adenosyl-L-methionine-dependent methyltransferase that acts as a component of the wybutosine biosynthesis pathway. Wybutosine is a hyper modified guanosine with a tricyclic base found at the 3'-position adjacent to the anticodon of eukaryotic phenylalanine tRNA. May methylate the carboxyl group of leucine residues to form alpha-leucine ester residues. In Aspergillus oryzae (strain ATCC 42149 / RIB 40) (Yellow koji mold), this protein is tRNA wybutosine-synthesizing protein 4 (ppm2).